The chain runs to 454 residues: Bifunctional protein GlmU (454 aa).

The pyrophosphorylase stretch occupies residues 1 to 226 (MSLEIVILAA…AMEVQGVNDR (226 aa)). UDP-N-acetyl-alpha-D-glucosamine is bound by residues 8–11 (LAAG), Lys-22, Gln-73, 78–79 (GT), 99–101 (YGD), Gly-136, Glu-151, Asn-166, and Asn-224. Residue Asp-101 participates in Mg(2+) binding. Residue Asn-224 participates in Mg(2+) binding. Residues 227 to 247 (MQQAQLERHYQRLRAEELMRQ) form a linker region. The tract at residues 248-454 (GVTLLDPQRL…NWKRPEKIRK (207 aa)) is N-acetyltransferase. UDP-N-acetyl-alpha-D-glucosamine-binding residues include Arg-330 and Lys-348. The active-site Proton acceptor is His-360. UDP-N-acetyl-alpha-D-glucosamine is bound by residues Tyr-363 and Asn-374. Residues Ala-377, 383 to 384 (NY), Ser-402, Ala-420, and Arg-437 each bind acetyl-CoA.

It in the N-terminal section; belongs to the N-acetylglucosamine-1-phosphate uridyltransferase family. The protein in the C-terminal section; belongs to the transferase hexapeptide repeat family. In terms of assembly, homotrimer. The cofactor is Mg(2+).

The protein resides in the cytoplasm. It catalyses the reaction alpha-D-glucosamine 1-phosphate + acetyl-CoA = N-acetyl-alpha-D-glucosamine 1-phosphate + CoA + H(+). The enzyme catalyses N-acetyl-alpha-D-glucosamine 1-phosphate + UTP + H(+) = UDP-N-acetyl-alpha-D-glucosamine + diphosphate. Its pathway is nucleotide-sugar biosynthesis; UDP-N-acetyl-alpha-D-glucosamine biosynthesis; N-acetyl-alpha-D-glucosamine 1-phosphate from alpha-D-glucosamine 6-phosphate (route II): step 2/2. The protein operates within nucleotide-sugar biosynthesis; UDP-N-acetyl-alpha-D-glucosamine biosynthesis; UDP-N-acetyl-alpha-D-glucosamine from N-acetyl-alpha-D-glucosamine 1-phosphate: step 1/1. It functions in the pathway bacterial outer membrane biogenesis; LPS lipid A biosynthesis. Its function is as follows. Catalyzes the last two sequential reactions in the de novo biosynthetic pathway for UDP-N-acetylglucosamine (UDP-GlcNAc). The C-terminal domain catalyzes the transfer of acetyl group from acetyl coenzyme A to glucosamine-1-phosphate (GlcN-1-P) to produce N-acetylglucosamine-1-phosphate (GlcNAc-1-P), which is converted into UDP-GlcNAc by the transfer of uridine 5-monophosphate (from uridine 5-triphosphate), a reaction catalyzed by the N-terminal domain. The polypeptide is Bifunctional protein GlmU (Pseudomonas paraeruginosa (strain DSM 24068 / PA7) (Pseudomonas aeruginosa (strain PA7))).